A 351-amino-acid polypeptide reads, in one-letter code: Ribosomal RNA small subunit methyltransferase H (351 aa).

Residues 48–50 (GGY), Asp-67, Phe-94, Asp-115, and Gln-122 contribute to the S-adenosyl-L-methionine site. The segment at 274 to 351 (AAQASRHVPG…PAPQGRGPRR (78 aa)) is disordered.

It belongs to the methyltransferase superfamily. RsmH family.

The protein resides in the cytoplasm. The enzyme catalyses cytidine(1402) in 16S rRNA + S-adenosyl-L-methionine = N(4)-methylcytidine(1402) in 16S rRNA + S-adenosyl-L-homocysteine + H(+). In terms of biological role, specifically methylates the N4 position of cytidine in position 1402 (C1402) of 16S rRNA. The protein is Ribosomal RNA small subunit methyltransferase H of Methylorubrum extorquens (strain ATCC 14718 / DSM 1338 / JCM 2805 / NCIMB 9133 / AM1) (Methylobacterium extorquens).